The sequence spans 415 residues: Histidine--tRNA ligase (415 aa).

The protein belongs to the class-II aminoacyl-tRNA synthetase family. In terms of assembly, homodimer.

Its subcellular location is the cytoplasm. The catalysed reaction is tRNA(His) + L-histidine + ATP = L-histidyl-tRNA(His) + AMP + diphosphate + H(+). This is Histidine--tRNA ligase from Clostridium perfringens (strain SM101 / Type A).